The primary structure comprises 1139 residues: Solute carrier family 12 member 5 (1139 aa).

Disordered stretches follow at residues 1 to 62 (MSRR…KGRE) and 95 to 116 (PQGS…KPVQ). The Cytoplasmic portion of the chain corresponds to 1–98 (MSRRFTVTSL…ANYTNLPQGS (98 aa)). Positions 21–45 (PESRRHSVADPRRLPREDVKGDGNP) are enriched in basic and acidic residues. Residues 46–55 (KESSPFINST) show a composition bias toward polar residues. Thr-57 carries the post-translational modification Phosphothreonine. Positions 98–111 (SKEHEEAENNEGGK) are enriched in basic and acidic residues. The chain crosses the membrane as a discontinuously helical span at residues 99–120 (KEHEEAENNEGGKKKPVQAPRM). Lys-113 is a binding site for K(+). Residues 121–129 (GTFMGVYLP) lie on the Extracellular side of the membrane. A helical transmembrane segment spans residues 130 to 151 (CLQNIFGVILFLRLTWVVGIAG). Residues 152–174 (IMESFCMVFICCSCTMLTAISMS) are Cytoplasmic-facing. Residues 175 to 203 (AIATNGVVPAGGSYYMISRSLGPEFGGAV) traverse the membrane as a helical segment. Ala-184 lines the chloride pocket. The Extracellular portion of the chain corresponds to 204-229 (GLCFYLGTTFAGAMYILGTIEILLAY). A run of 2 helical transmembrane segments spans residues 230–250 (LFPA…AAML) and 251–276 (NNMR…KYVN). Residues 277–402 (KFALVFLGCV…ERRGMPSVGL (126 aa)) lie on the Extracellular side of the membrane. Cys-310 and Cys-325 are joined by a disulfide. Residues Asn-314, Asn-333, Asn-351, and Asn-362 are each glycosylated (N-linked (GlcNAc...) asparagine). A disulfide bridge connects residues Cys-345 and Cys-354. Residues 403–420 (ADGTPVDMDHPYVFSDMT) form a helical membrane-spanning segment. Met-410 serves as a coordination point for K(+). Chloride is bound by residues Tyr-414 and Val-415. At 421–429 (SYFTLLVGI) the chain is on the cytoplasmic side. A helical transmembrane segment spans residues 430 to 453 (YFPSVTGIMAGSNRSGDLRDAQKS). Residue Asp-446 coordinates K(+). The Extracellular portion of the chain corresponds to 454-485 (IPTGTILAIATTSAVYISSVVLFGACIEGVVL). The helical transmembrane segment at 486 to 513 (RDKFGEAVNGNLVVGTLAWPSPWVIVIG) threads the bilayer. Residues 514–534 (SFFSTCGAGLQSLTGAPRLLQ) lie on the Cytoplasmic side of the membrane. Helical transmembrane passes span 535–555 (AISR…KANG) and 556–578 (EPTW…ASLD). Glu-569 is a binding site for chloride. The Cytoplasmic portion of the chain corresponds to 579-592 (EVAPILSMFFLMCY). Transmembrane regions (helical) follow at residues 593 to 615 (MFVN…PRFR) and 616 to 632 (YYHW…CLAL). The Cytoplasmic portion of the chain corresponds to 633-1139 (MFICSWYYAL…GGREVITIYS (507 aa)). Residues 667–681 (GIRGLSLSAARYALL) form a scissor helix region. At Thr-929 the chain carries Phosphothreonine; by OXSR1 and STK39. Residues 943 to 1025 (HLTKNERERE…PEGEGETDPE (83 aa)) are disordered. Over residues 945–962 (TKNEREREIQSITDESRG) the composition is skewed to basic and acidic residues. A compositionally biased stretch (acidic residues) spans 982 to 994 (TACDNEEKPEEEV). The segment covering 1003–1012 (PSCPSSSPSP) has biased composition (low complexity). Thr-1030 is subject to Phosphothreonine; by OXSR1 and STK39. Positions 1033-1052 (KDKSAAQKNKGPSPVSSEGI) are disordered. 3 positions are modified to phosphoserine: Ser-1045, Ser-1048, and Ser-1049.

This sequence belongs to the SLC12A transporter family. K/Cl co-transporter subfamily. Homodimer; adopts a domain-swap conformation at the scissor helices connecting the transmembrane domain and C-terminal domain. Heterodimer wHeterodimer with K-Cl cotransporters SLC12A6 and SLC12A7. Interacts with AP2A1. In terms of processing, phosphorylated at Thr-929 and Thr-1030 by OXSR1/OSR1 and STK39/SPAK downstream of WNK kinases (WNK1, WNK2, WNK3 or WNK4), inhibiting the potassium-chloride cotransport activity. Highly expressed in brain. Not detected in other tissues. Highly expressed in pyramidal neurons and in neurons throughout the cortex, hippocampus, the granular layer of the cerebellum and in groups of neurons throughout the brainstem. Barely detectable in dorsal-root ganglions.

The protein resides in the cell membrane. It is found in the cell projection. The protein localises to the dendrite. The enzyme catalyses K(+)(in) + chloride(in) = K(+)(out) + chloride(out). Its activity is regulated as follows. Inhibited following phosphorylation by OXSR1/OSR1 and STK39/SPAK: phosphorylation takes place downstream of WNK kinases (WNK1, WNK2, WNK3 or WNK4) in response to hyperosmotic stress and subsequent cell shrinkage. In terms of biological role, mediates electroneutral potassium-chloride cotransport in mature neurons and is required for neuronal Cl(-) homeostasis. As major extruder of intracellular chloride, it establishes the low neuronal Cl(-) levels required for chloride influx after binding of GABA-A and glycine to their receptors, with subsequent hyperpolarization and neuronal inhibition. Involved in the regulation of dendritic spine formation and maturation. The chain is Solute carrier family 12 member 5 (Slc12a5) from Rattus norvegicus (Rat).